The sequence spans 666 residues: Calpain-10 (666 aa).

The region spanning 13-321 (LFRDAAFPAS…FDEVTIGYPV (309 aa)) is the Calpain catalytic domain. Residues C73, H238, and N263 contribute to the active site. Domain III stretches follow at residues 322–488 (TEAG…ISLS) and 507–648 (EWET…IHSQ).

This sequence belongs to the peptidase C2 family.

Functionally, calcium-regulated non-lysosomal thiol-protease which catalyzes limited proteolysis of substrates involved in cytoskeletal remodeling and signal transduction. May play a role in insulin-stimulated glucose uptake. The protein is Calpain-10 (Capn10) of Mus musculus (Mouse).